Reading from the N-terminus, the 264-residue chain is S-adenosylmethionine decarboxylase proenzyme (264 aa).

Ser113 (schiff-base intermediate with substrate; via pyruvic acid) is an active-site residue. Position 113 is a pyruvic acid (Ser); by autocatalysis (Ser113). Catalysis depends on His118, which acts as the Proton acceptor; for processing activity. Catalysis depends on Cys141, which acts as the Proton donor; for catalytic activity.

The protein belongs to the prokaryotic AdoMetDC family. Type 2 subfamily. As to quaternary structure, heterooctamer of four alpha and four beta chains arranged as a tetramer of alpha/beta heterodimers. It depends on pyruvate as a cofactor. Is synthesized initially as an inactive proenzyme. Formation of the active enzyme involves a self-maturation process in which the active site pyruvoyl group is generated from an internal serine residue via an autocatalytic post-translational modification. Two non-identical subunits are generated from the proenzyme in this reaction, and the pyruvate is formed at the N-terminus of the alpha chain, which is derived from the carboxyl end of the proenzyme. The post-translation cleavage follows an unusual pathway, termed non-hydrolytic serinolysis, in which the side chain hydroxyl group of the serine supplies its oxygen atom to form the C-terminus of the beta chain, while the remainder of the serine residue undergoes an oxidative deamination to produce ammonia and the pyruvoyl group blocking the N-terminus of the alpha chain.

The enzyme catalyses S-adenosyl-L-methionine + H(+) = S-adenosyl 3-(methylsulfanyl)propylamine + CO2. It participates in amine and polyamine biosynthesis; S-adenosylmethioninamine biosynthesis; S-adenosylmethioninamine from S-adenosyl-L-methionine: step 1/1. Functionally, catalyzes the decarboxylation of S-adenosylmethionine to S-adenosylmethioninamine (dcAdoMet), the propylamine donor required for the synthesis of the polyamines spermine and spermidine from the diamine putrescine. The chain is S-adenosylmethionine decarboxylase proenzyme from Pseudomonas paraeruginosa (strain DSM 24068 / PA7) (Pseudomonas aeruginosa (strain PA7)).